The following is a 250-amino-acid chain: Complement factor B-like protease (250 aa).

3 Sushi domains span residues 3-73 (TRCD…KCRA), 74-133 (VWCP…VCDD), and 136-193 (GDCP…QCRA). Disulfide bonds link C5–C44, C30–C71, C76–C118, C104–C131, C138–C178, and C164–C191. N115 carries an N-linked (GlcNAc...) asparagine glycan. N-linked (GlcNAc...) asparagine glycosylation occurs at N221.

Belongs to the peptidase S1 family. As to expression, plasma.

It is found in the secreted. Its function is as follows. Required in both the classical and alternate pathways of the complement system. The chain is Complement factor B-like protease from Gallus gallus (Chicken).